The following is an 845-amino-acid chain: METQRNYPSLWRWGTLILGMLLICSAAQNLWVTVYYGVPVWKEAKTTLFCASDAKAYETEKHNVWATHACVPTDPNPQEMVMENVTESFNMWENNMVEQMHTDIISLWDQSLKPCVKLTPLCVTLNCTNVRNNTSNSTSSMEAGGELTNCSFNVTTVLRDKQQKVHALFYRLDVVPIDNNSTQYRLINCNTSVITQACPKVSFEPIPIHYCAPAGFAILKCNNKTFNGTGLCTNVSTVQCTHGIRPVVSTQLLLNGSLAEEQIIIRTKNISDNTKNIIVQLKTPVNITCTRPNNNTRTSIHLGPGRAFYATGDIIGDIRQAHCNISRTDWNKTLHQVVTQLGIHLNNRTISFKPNSGGDMEVRTHSFNCRGEFFYCNTSGLFNSSWEMHTNYTSNDTKGNENITLPCRIKQIVNMWQRVGRAMYAPPIQGNIMCVSNITGLILTIDEGNASAENYTFRPGGGDMRDNWRSELYKYKVVKIEPLGIAPTKTRRRVVEREKRAVGMGASFLGFLGAAGSTMGAASITLTVQARQLLSGIVQQQSNLLRAIQARQHMLQLTVWGIKQLQARVLAVERYLRDQQLLGIWGCSGKLICTTNVPWNSSWSNKSQSEIWDNMTWMEWDKQISNYTEEIYRLLEVSQTQQEKNEQDLLALDKWASLWTWFDISHWLWYIKIFIMIVGGLIGLRIIFAVLSIVNRVRQGYSPLSFQTLVPNPRGPDRPEGTEEGGGEQDRDRSVRLVNGFLPVVWDDLRSLSLFSYRLLRDLLLIVVRTVELLGRRGREALKYLWNLLQYWGQELKNSAIDLLNTTAIAVAEGTDGIIVIVQRAWRAILHIPRRIRQGFERSLL.

Positions 1–28 are cleaved as a signal peptide; the sequence is METQRNYPSLWRWGTLILGMLLICSAAQ. At 29-673 the chain is on the extracellular side; the sequence is NLWVTVYYGV…ISHWLWYIKI (645 aa). A disulfide bond links cysteine 50 and cysteine 70. N-linked (GlcNAc...) asparagine; by host glycosylation is found at asparagine 84, asparagine 126, asparagine 132, asparagine 133, asparagine 136, asparagine 149, asparagine 153, asparagine 179, asparagine 180, asparagine 190, asparagine 223, asparagine 227, asparagine 234, asparagine 255, asparagine 269, asparagine 286, asparagine 294, asparagine 324, asparagine 331, and asparagine 347. Intrachain disulfides connect cysteine 115-cysteine 198, cysteine 122-cysteine 189, cysteine 127-cysteine 150, cysteine 211-cysteine 240, and cysteine 221-cysteine 232. The tract at residues 127 to 149 is V1; it reads CTNVRNNTSNSTSSMEAGGELTN. The segment at 150 to 189 is V2; sequence CSFNVTTVLRDKQQKVHALFYRLDVVPIDNNSTQYRLINC. The tract at residues 289 to 322 is V3; that stretch reads CTRPNNNTRTSIHLGPGRAFYATGDIIGDIRQAH. A disulfide bridge connects residues cysteine 289 and cysteine 323. The interval 355–365 is CD4-binding loop; sequence NSGGDMEVRTH. Cystine bridges form between cysteine 369–cysteine 434 and cysteine 376–cysteine 407. The interval 376–407 is V4; sequence CNTSGLFNSSWEMHTNYTSNDTKGNENITLPC. N-linked (GlcNAc...) asparagine; by host glycans are attached at residues asparagine 377, asparagine 383, asparagine 391, asparagine 395, asparagine 402, asparagine 437, asparagine 449, and asparagine 454. 2 V5 regions span residues 450-460 and 452-460; these read ASAENYTFRPG and AENYTFRPG. The fusion peptide stretch occupies residues 501–521; the sequence is AVGMGASFLGFLGAAGSTMGA. The immunosuppression stretch occupies residues 563–581; it reads KQLQARVLAVERYLRDQQL. Cysteines 587 and 593 form a disulfide. N-linked (GlcNAc...) asparagine; by host glycosylation is found at asparagine 600, asparagine 605, asparagine 614, and asparagine 626. A coiled-coil region spans residues 622–656; that stretch reads KQISNYTEEIYRLLEVSQTQQEKNEQDLLALDKWA. The segment at 651–672 is MPER; binding to GalCer; that stretch reads ALDKWASLWTWFDISHWLWYIK. A helical transmembrane segment spans residues 674–694; sequence FIMIVGGLIGLRIIFAVLSIV. Residues 695–845 are Cytoplasmic-facing; sequence NRVRQGYSPL…IRQGFERSLL (151 aa). The short motif at 701-704 is the YXXL motif; contains endocytosis signal element; that stretch reads YSPL. A disordered region spans residues 708-731; the sequence is TLVPNPRGPDRPEGTEEGGGEQDR. The Di-leucine internalization motif signature appears at 844–845; that stretch reads LL.

This sequence belongs to the HIV-1 env protein family. As to quaternary structure, the mature envelope protein (Env) consists of a homotrimer of non-covalently associated gp120-gp41 heterodimers. The resulting complex protrudes from the virus surface as a spike. There seems to be as few as 10 spikes on the average virion. Interacts with host CD4, CCR5 and CXCR4. Gp120 also interacts with the C-type lectins CD209/DC-SIGN and CLEC4M/DC-SIGNR (collectively referred to as DC-SIGN(R)). Gp120 and gp41 interact with GalCer. Gp120 interacts with host ITGA4/ITGB7 complex; on CD4+ T-cells, this interaction results in rapid activation of integrin ITGAL/LFA-1, which facilitates efficient cell-to-cell spreading of HIV-1. Gp120 interacts with cell-associated heparan sulfate; this interaction increases virus infectivity on permissive cells and may be involved in infection of CD4- cells. The mature envelope protein (Env) consists of a homotrimer of non-covalently associated gp120-gp41 heterodimers. The resulting complex protrudes from the virus surface as a spike. There seems to be as few as 10 spikes on the average virion. In terms of processing, highly glycosylated by host. The high number of glycan on the protein is reffered to as 'glycan shield' because it contributes to hide protein sequence from adaptive immune system. Post-translationally, palmitoylation of the transmembrane protein and of Env polyprotein (prior to its proteolytic cleavage) is essential for their association with host cell membrane lipid rafts. Palmitoylation is therefore required for envelope trafficking to classical lipid rafts, but not for viral replication. Specific enzymatic cleavages in vivo yield mature proteins. Envelope glycoproteins are synthesized as an inactive precursor that is heavily N-glycosylated and processed likely by host cell furin in the Golgi to yield the mature SU and TM proteins. The cleavage site between SU and TM requires the minimal sequence [KR]-X-[KR]-R. About 2 of the 9 disulfide bonds of gp41 are reduced by P4HB/PDI, following binding to CD4 receptor.

It localises to the virion membrane. It is found in the host cell membrane. Its subcellular location is the host endosome membrane. In terms of biological role, oligomerizes in the host endoplasmic reticulum into predominantly trimers. In a second time, gp160 transits in the host Golgi, where glycosylation is completed. The precursor is then proteolytically cleaved in the trans-Golgi and thereby activated by cellular furin or furin-like proteases to produce gp120 and gp41. Its function is as follows. Attaches the virus to the host lymphoid cell by binding to the primary receptor CD4. This interaction induces a structural rearrangement creating a high affinity binding site for a chemokine coreceptor like CXCR4 and/or CCR5. Acts as a ligand for CD209/DC-SIGN and CLEC4M/DC-SIGNR, which are respectively found on dendritic cells (DCs), and on endothelial cells of liver sinusoids and lymph node sinuses. These interactions allow capture of viral particles at mucosal surfaces by these cells and subsequent transmission to permissive cells. HIV subverts the migration properties of dendritic cells to gain access to CD4+ T-cells in lymph nodes. Virus transmission to permissive T-cells occurs either in trans (without DCs infection, through viral capture and transmission), or in cis (following DCs productive infection, through the usual CD4-gp120 interaction), thereby inducing a robust infection. In trans infection, bound virions remain infectious over days and it is proposed that they are not degraded, but protected in non-lysosomal acidic organelles within the DCs close to the cell membrane thus contributing to the viral infectious potential during DCs' migration from the periphery to the lymphoid tissues. On arrival at lymphoid tissues, intact virions recycle back to DCs' cell surface allowing virus transmission to CD4+ T-cells. Functionally, acts as a class I viral fusion protein. Under the current model, the protein has at least 3 conformational states: pre-fusion native state, pre-hairpin intermediate state, and post-fusion hairpin state. During fusion of viral and target intracellular membranes, the coiled coil regions (heptad repeats) assume a trimer-of-hairpins structure, positioning the fusion peptide in close proximity to the C-terminal region of the ectodomain. The formation of this structure appears to drive apposition and subsequent fusion of viral and target cell membranes. Complete fusion occurs in host cell endosomes and is dynamin-dependent, however some lipid transfer might occur at the plasma membrane. The virus undergoes clathrin-dependent internalization long before endosomal fusion, thus minimizing the surface exposure of conserved viral epitopes during fusion and reducing the efficacy of inhibitors targeting these epitopes. Membranes fusion leads to delivery of the nucleocapsid into the cytoplasm. The polypeptide is Envelope glycoprotein gp160 (Homo sapiens (Human)).